Consider the following 286-residue polypeptide: Digeranylgeranylglyceryl phosphate synthase (286 aa).

8 helical membrane passes run 21 to 41 (AVAAGVLTFTGAFVAGGFAVT), 42 to 62 (TAHVTGAVAATIFATAAGNAI), 96 to 116 (FLFVAAVVSTSVLPLIAIVLA), 133 to 155 (LPGVGNAIVAYLTGSTFLFGAAA), 162 to 181 (FGVVVLFILAALATATREII), 214 to 234 (VLLVAVIASIVPYVIGIFGIW), 235 to 255 (YLTLVVPADMIMLIGVWQAPD), and 266 to 286 (RGMFVAAAAFVVGRAVVVAGI).

This sequence belongs to the UbiA prenyltransferase family. DGGGP synthase subfamily. It depends on Mg(2+) as a cofactor.

It localises to the cell membrane. The enzyme catalyses sn-3-O-(geranylgeranyl)glycerol 1-phosphate + (2E,6E,10E)-geranylgeranyl diphosphate = 2,3-bis-O-(geranylgeranyl)-sn-glycerol 1-phosphate + diphosphate. Its pathway is membrane lipid metabolism; glycerophospholipid metabolism. In terms of biological role, prenyltransferase that catalyzes the transfer of the geranylgeranyl moiety of geranylgeranyl diphosphate (GGPP) to the C2 hydroxyl of (S)-3-O-geranylgeranylglyceryl phosphate (GGGP). This reaction is the second ether-bond-formation step in the biosynthesis of archaeal membrane lipids. The chain is Digeranylgeranylglyceryl phosphate synthase from Haloquadratum walsbyi (strain DSM 16790 / HBSQ001).